The chain runs to 429 residues: Ribosomal RNA small subunit methyltransferase B (429 aa).

Residues 254–260 (CAAPGGK), Asp277, Asp303, and Asp322 contribute to the S-adenosyl-L-methionine site. The Nucleophile role is filled by Cys375.

This sequence belongs to the class I-like SAM-binding methyltransferase superfamily. RsmB/NOP family.

The protein resides in the cytoplasm. It carries out the reaction cytidine(967) in 16S rRNA + S-adenosyl-L-methionine = 5-methylcytidine(967) in 16S rRNA + S-adenosyl-L-homocysteine + H(+). Its function is as follows. Specifically methylates the cytosine at position 967 (m5C967) of 16S rRNA. The polypeptide is Ribosomal RNA small subunit methyltransferase B (Shigella flexneri serotype 5b (strain 8401)).